The primary structure comprises 309 residues: Porphobilinogen deaminase (309 aa).

Cysteine 242 bears the S-(dipyrrolylmethanemethyl)cysteine mark.

It belongs to the HMBS family. In terms of assembly, monomer. The cofactor is dipyrromethane.

It catalyses the reaction 4 porphobilinogen + H2O = hydroxymethylbilane + 4 NH4(+). Its pathway is porphyrin-containing compound metabolism; protoporphyrin-IX biosynthesis; coproporphyrinogen-III from 5-aminolevulinate: step 2/4. Its function is as follows. Tetrapolymerization of the monopyrrole PBG into the hydroxymethylbilane pre-uroporphyrinogen in several discrete steps. The protein is Porphobilinogen deaminase of Actinobacillus succinogenes (strain ATCC 55618 / DSM 22257 / CCUG 43843 / 130Z).